The primary structure comprises 339 residues: Ketol-acid reductoisomerase (NADP(+)) (339 aa).

Residues methionine 1–threonine 182 enclose the KARI N-terminal Rossmann domain. NADP(+) is bound by residues tyrosine 24 to glutamine 27, arginine 48, serine 51, serine 53, and aspartate 83 to glutamine 86. Histidine 108 is an active-site residue. Glycine 134 is an NADP(+) binding site. Residues threonine 183 to isoleucine 328 enclose the KARI C-terminal knotted domain. Aspartate 191, glutamate 195, glutamate 227, and glutamate 231 together coordinate Mg(2+). A substrate-binding site is contributed by serine 252.

It belongs to the ketol-acid reductoisomerase family. The cofactor is Mg(2+).

The catalysed reaction is (2R)-2,3-dihydroxy-3-methylbutanoate + NADP(+) = (2S)-2-acetolactate + NADPH + H(+). It carries out the reaction (2R,3R)-2,3-dihydroxy-3-methylpentanoate + NADP(+) = (S)-2-ethyl-2-hydroxy-3-oxobutanoate + NADPH + H(+). It participates in amino-acid biosynthesis; L-isoleucine biosynthesis; L-isoleucine from 2-oxobutanoate: step 2/4. It functions in the pathway amino-acid biosynthesis; L-valine biosynthesis; L-valine from pyruvate: step 2/4. Its function is as follows. Involved in the biosynthesis of branched-chain amino acids (BCAA). Catalyzes an alkyl-migration followed by a ketol-acid reduction of (S)-2-acetolactate (S2AL) to yield (R)-2,3-dihydroxy-isovalerate. In the isomerase reaction, S2AL is rearranged via a Mg-dependent methyl migration to produce 3-hydroxy-3-methyl-2-ketobutyrate (HMKB). In the reductase reaction, this 2-ketoacid undergoes a metal-dependent reduction by NADPH to yield (R)-2,3-dihydroxy-isovalerate. This chain is Ketol-acid reductoisomerase (NADP(+)), found in Nitrobacter hamburgensis (strain DSM 10229 / NCIMB 13809 / X14).